The following is a 198-amino-acid chain: Dynein axonemal light chain 1 (198 aa).

LRR repeat units follow at residues 49–70 (ACKHLALSTNNIEKISSLSGME), 71–92 (NLRILSLGRNLIKKIENLDAVA), 94–115 (TLEELWISYNQIASLSGIEKLV), and 116–137 (NLRVLYMSNNKITNWGEIDKLA). The 39-residue stretch at 157–195 (KENNATSEYRIEVVKRLPNLKKLDGMPVDVDEREQANVA) folds into the LRRCT domain.

It belongs to the dynein light chain LC1-type family. As to quaternary structure, interacts with OCAD2, a outer arm dynein heavy chain. Interacts with tubulin (previously called p45) located within the A-tubule of the outer doublets in a ATP-independent manner.

The protein localises to the cytoplasm. The protein resides in the cytoskeleton. It localises to the flagellum axoneme. In terms of biological role, part of the multisubunit axonemal ATPase complexes that generate the force for flagellar motility and govern beat frequency. Component of the outer arm dynein (ODA). May be involved in a mechanosensory feedback mechanism controlling ODA activity based on external conformational cues by tethering the outer arm dynein heavy chain (ODA2) to the A-tubule of the outer doublet microtubules within the axoneme. The chain is Dynein axonemal light chain 1 from Chlamydomonas reinhardtii (Chlamydomonas smithii).